The primary structure comprises 653 residues: Macrolide export ATP-binding/permease protein MacB (653 aa).

The ABC transporter domain occupies 6–244; the sequence is LQLTRVTRRF…DAAPDASGGA (239 aa). 42–49 contributes to the ATP binding site; that stretch reads GASGSGKS. Helical transmembrane passes span 278 to 298, 526 to 546, 587 to 607, and 616 to 636; these read LLTM…VAIG, LTLL…IGVM, MGGA…SLFV, and AASI…FGFM.

The protein belongs to the ABC transporter superfamily. Macrolide exporter (TC 3.A.1.122) family. As to quaternary structure, homodimer.

The protein localises to the cell inner membrane. Functionally, non-canonical ABC transporter that contains transmembrane domains (TMD), which form a pore in the inner membrane, and an ATP-binding domain (NBD), which is responsible for energy generation. Confers resistance against macrolides. This chain is Macrolide export ATP-binding/permease protein MacB, found in Burkholderia pseudomallei (strain 1710b).